The sequence spans 807 residues: Dual specificity protein kinase YAK1 (807 aa).

Residues 1-19 (MNSSNNNDSSSSNSNMNNS) are compositionally biased toward low complexity. The interval 1 to 84 (MNSSNNNDSS…QQQQQQQQNS (84 aa)) is disordered. Residues 20–31 (LSPTLVTHSDAS) show a composition bias toward polar residues. Residue Ser38 is modified to Phosphoserine. A compositionally biased stretch (low complexity) spans 55-84 (NQGSQRSPQQQHQNHHQQQQQQQQQQQQNS). Residues Ser115, Ser118, and Ser127 each carry the phosphoserine modification. The segment at 124–180 (RRKSSLVVPPARAPAPNPFQYDSYPAYTSSNTSLAGNSSGQYPSGYQQQQQQVYQQG) is disordered. Over residues 149-160 (AYTSSNTSLAGN) the composition is skewed to polar residues. A compositionally biased stretch (low complexity) spans 161–180 (SSGQYPSGYQQQQQQVYQQG). At Ser206 the chain carries Phosphoserine. Low complexity predominate over residues 214 to 224 (SNFSSLNSNTN). The segment at 214-254 (SNFSSLNSNTNQGTNSIPVMSPYRRLSAYPPSTSPPLQPPF) is disordered. Phosphoserine occurs at positions 240, 245, and 247. Residue Thr288 is modified to Phosphothreonine. The residue at position 295 (Ser295) is a Phosphoserine. Positions 369–704 (YLVLDILGQG…PQQAMLHPFI (336 aa)) constitute a Protein kinase domain. ATP-binding positions include 375–383 (LGQGTFGQV) and Lys398. Asp496 (proton acceptor) is an active-site residue. Residue Tyr530 is modified to Phosphotyrosine. A disordered region spans residues 714-758 (FPPGSSLPGPSEKHDDAKGQQSEYGSANDSSNNAGHNYVYNPSSA). Over residues 732-758 (GQQSEYGSANDSSNNAGHNYVYNPSSA) the composition is skewed to polar residues.

Belongs to the protein kinase superfamily. CMGC Ser/Thr protein kinase family. MNB/DYRK subfamily. Phosphorylated; highly.

It localises to the cytoplasm. The protein resides in the nucleus. It carries out the reaction L-seryl-[protein] + ATP = O-phospho-L-seryl-[protein] + ADP + H(+). It catalyses the reaction L-threonyl-[protein] + ATP = O-phospho-L-threonyl-[protein] + ADP + H(+). The enzyme catalyses L-tyrosyl-[protein] + ATP = O-phospho-L-tyrosyl-[protein] + ADP + H(+). Negative regulator of the cell cycle acting downstream of the cAMP-dependent protein kinase. Part of a glucose-sensing system involved in growth control in response to glucose availability. Phosphorylates POP2. This chain is Dual specificity protein kinase YAK1 (YAK1), found in Saccharomyces cerevisiae (strain ATCC 204508 / S288c) (Baker's yeast).